The sequence spans 78 residues: Acyl carrier protein (78 aa).

Residues 2–77 form the Carrier domain; it reads SEIASRVKAI…DAVSYIEANA (76 aa). Position 37 is an O-(pantetheine 4'-phosphoryl)serine (serine 37).

The protein belongs to the acyl carrier protein (ACP) family. Post-translationally, 4'-phosphopantetheine is transferred from CoA to a specific serine of apo-ACP by AcpS. This modification is essential for activity because fatty acids are bound in thioester linkage to the sulfhydryl of the prosthetic group.

It localises to the cytoplasm. It participates in lipid metabolism; fatty acid biosynthesis. In terms of biological role, carrier of the growing fatty acid chain in fatty acid biosynthesis. This Phocaeicola vulgatus (strain ATCC 8482 / DSM 1447 / JCM 5826 / CCUG 4940 / NBRC 14291 / NCTC 11154) (Bacteroides vulgatus) protein is Acyl carrier protein.